Here is a 497-residue protein sequence, read N- to C-terminus: Glycerol kinase (497 aa).

ADP is bound at residue Thr11. 3 residues coordinate ATP: Thr11, Ser12, and Ser13. Thr11 is a binding site for sn-glycerol 3-phosphate. Arg15 contacts ADP. Sn-glycerol 3-phosphate contacts are provided by Arg81, Glu82, Tyr133, and Asp242. Residues Arg81, Glu82, Tyr133, Asp242, and Gln243 each contribute to the glycerol site. Residues Thr264 and Gly307 each coordinate ADP. Residues Thr264, Gly307, Gln311, and Gly412 each coordinate ATP. ADP-binding residues include Gly412 and Asn416.

Belongs to the FGGY kinase family.

It catalyses the reaction glycerol + ATP = sn-glycerol 3-phosphate + ADP + H(+). Its pathway is polyol metabolism; glycerol degradation via glycerol kinase pathway; sn-glycerol 3-phosphate from glycerol: step 1/1. Inhibited by fructose 1,6-bisphosphate (FBP). Functionally, key enzyme in the regulation of glycerol uptake and metabolism. Catalyzes the phosphorylation of glycerol to yield sn-glycerol 3-phosphate. The chain is Glycerol kinase from Leptothrix cholodnii (strain ATCC 51168 / LMG 8142 / SP-6) (Leptothrix discophora (strain SP-6)).